The chain runs to 342 residues: GTPase Obg (342 aa).

Positions 1–159 (MQFIDQAKIE…KQLRLELKLL (159 aa)) constitute an Obg domain. An OBG-type G domain is found at 160–330 (AEVGIIGLPN…MLQEIWGILD (171 aa)). Residues 166–173 (GLPNAGKS), 191–195 (FTTLI), 213–216 (DIPG), 280–283 (NKID), and 311–313 (SAV) each bind GTP. The Mg(2+) site is built by Ser-173 and Thr-193.

This sequence belongs to the TRAFAC class OBG-HflX-like GTPase superfamily. OBG GTPase family. Monomer. Requires Mg(2+) as cofactor.

It localises to the cytoplasm. Its function is as follows. An essential GTPase which binds GTP, GDP and possibly (p)ppGpp with moderate affinity, with high nucleotide exchange rates and a fairly low GTP hydrolysis rate. Plays a role in control of the cell cycle, stress response, ribosome biogenesis and in those bacteria that undergo differentiation, in morphogenesis control. This Nostoc punctiforme (strain ATCC 29133 / PCC 73102) protein is GTPase Obg.